The sequence spans 219 residues: uncharacterized protein (219 aa).

This is an uncharacterized protein from Treponema pallidum (strain Nichols).